Reading from the N-terminus, the 104-residue chain is Pyrimidine/purine nucleoside phosphorylase (104 aa).

The protein belongs to the nucleoside phosphorylase PpnP family.

The enzyme catalyses a purine D-ribonucleoside + phosphate = a purine nucleobase + alpha-D-ribose 1-phosphate. The catalysed reaction is adenosine + phosphate = alpha-D-ribose 1-phosphate + adenine. It carries out the reaction cytidine + phosphate = cytosine + alpha-D-ribose 1-phosphate. It catalyses the reaction guanosine + phosphate = alpha-D-ribose 1-phosphate + guanine. The enzyme catalyses inosine + phosphate = alpha-D-ribose 1-phosphate + hypoxanthine. The catalysed reaction is thymidine + phosphate = 2-deoxy-alpha-D-ribose 1-phosphate + thymine. It carries out the reaction uridine + phosphate = alpha-D-ribose 1-phosphate + uracil. It catalyses the reaction xanthosine + phosphate = alpha-D-ribose 1-phosphate + xanthine. Its function is as follows. Catalyzes the phosphorolysis of diverse nucleosides, yielding D-ribose 1-phosphate and the respective free bases. Can use uridine, adenosine, guanosine, cytidine, thymidine, inosine and xanthosine as substrates. Also catalyzes the reverse reactions. The protein is Pyrimidine/purine nucleoside phosphorylase of Colwellia psychrerythraea (strain 34H / ATCC BAA-681) (Vibrio psychroerythus).